The sequence spans 122 residues: Large ribosomal subunit protein uL14 (122 aa).

Belongs to the universal ribosomal protein uL14 family. Part of the 50S ribosomal subunit. Forms a cluster with proteins L3 and L19. In the 70S ribosome, L14 and L19 interact and together make contacts with the 16S rRNA in bridges B5 and B8.

In terms of biological role, binds to 23S rRNA. Forms part of two intersubunit bridges in the 70S ribosome. This Latilactobacillus sakei subsp. sakei (strain 23K) (Lactobacillus sakei subsp. sakei) protein is Large ribosomal subunit protein uL14.